Consider the following 203-residue polypeptide: MKSANGPLRVGIGGPVGSGKTALTEKLCKAMRDRYSVAVVTNDIYTREDADALIRMQALSSDRVVGVETGGCPHTAIREDASINLQAIAGLNERIPDLDVIFIESGGDNLAATFSPDLADVTIYVISVCQGEEIPRKGGPGITRSDLLVINKKDLAPYVEVDLDVMDRDAARMRDARPHVFSDLKRGEGVADIVRFLESHGGL.

14–21 (GPVGSGKT) contacts GTP.

It belongs to the SIMIBI class G3E GTPase family. UreG subfamily. Homodimer. UreD, UreF and UreG form a complex that acts as a GTP-hydrolysis-dependent molecular chaperone, activating the urease apoprotein by helping to assemble the nickel containing metallocenter of UreC. The UreE protein probably delivers the nickel.

The protein resides in the cytoplasm. Functionally, facilitates the functional incorporation of the urease nickel metallocenter. This process requires GTP hydrolysis, probably effectuated by UreG. This is Urease accessory protein UreG from Allorhizobium ampelinum (strain ATCC BAA-846 / DSM 112012 / S4) (Agrobacterium vitis (strain S4)).